Reading from the N-terminus, the 335-residue chain is Methionine import ATP-binding protein MetN 2 (335 aa).

Residues Ile-2–Val-242 form the ABC transporter domain. Residue Gly-38–Ser-45 participates in ATP binding.

The protein belongs to the ABC transporter superfamily. Methionine importer (TC 3.A.1.24) family. The complex is composed of two ATP-binding proteins (MetN), two transmembrane proteins (MetI) and a solute-binding protein (MetQ).

It is found in the cell inner membrane. It catalyses the reaction L-methionine(out) + ATP + H2O = L-methionine(in) + ADP + phosphate + H(+). The enzyme catalyses D-methionine(out) + ATP + H2O = D-methionine(in) + ADP + phosphate + H(+). In terms of biological role, part of the ABC transporter complex MetNIQ involved in methionine import. Responsible for energy coupling to the transport system. The sequence is that of Methionine import ATP-binding protein MetN 2 from Pseudomonas aeruginosa (strain UCBPP-PA14).